Consider the following 446-residue polypeptide: D-inositol 3-phosphate glycosyltransferase (446 aa).

His19 contacts 1D-myo-inositol 3-phosphate. UDP-N-acetyl-alpha-D-glucosamine contacts are provided by residues 25–26 (QP) and Gly33. 1D-myo-inositol 3-phosphate contacts are provided by residues 30–35 (DAGGMN), Lys88, Tyr121, Thr145, and Arg165. Residues Arg239, Lys244, and Gln303 each contribute to the UDP-N-acetyl-alpha-D-glucosamine site. Mg(2+)-binding residues include Tyr312, Arg313, and Ser315. UDP-N-acetyl-alpha-D-glucosamine is bound by residues Glu325 and Glu333. Thr339 contacts Mg(2+).

The protein belongs to the glycosyltransferase group 1 family. MshA subfamily. Homodimer.

The enzyme catalyses 1D-myo-inositol 3-phosphate + UDP-N-acetyl-alpha-D-glucosamine = 1D-myo-inositol 2-acetamido-2-deoxy-alpha-D-glucopyranoside 3-phosphate + UDP + H(+). Its function is as follows. Catalyzes the transfer of a N-acetyl-glucosamine moiety to 1D-myo-inositol 3-phosphate to produce 1D-myo-inositol 2-acetamido-2-deoxy-glucopyranoside 3-phosphate in the mycothiol biosynthesis pathway. The polypeptide is D-inositol 3-phosphate glycosyltransferase (Rhodococcus opacus (strain B4)).